The primary structure comprises 253 residues: Major prion protein (253 aa).

Positions 1–22 (MANLGCWMLVLFVATWSDLGLC) are cleaved as a signal peptide. Residues 23–230 (KKRPKPGGWN…ESQAYYQRGS (208 aa)) are interaction with GRB2, ERI3 and SYN1. The tract at residues 26 to 108 (PKPGGWNTGG…WNKPSKPKTN (83 aa)) is disordered. Tandem repeats lie at residues 51-59 (PQGGGGWGQ), 60-67 (PHGGGWGQ), 68-75 (PHGGGWGQ), 76-83 (PHGGGWGQ), and 84-91 (PHGGGWGQ). Residues 51–91 (PQGGGGWGQPHGGGWGQPHGGGWGQPHGGGWGQPHGGGWGQ) are 5 X 8 AA tandem repeats of P-H-G-G-G-W-G-Q. Residues 52 to 95 (QGGGGWGQPHGGGWGQPHGGGWGQPHGGGWGQPHGGGWGQGGGT) show a composition bias toward gly residues. His-61, Gly-62, Gly-63, His-69, Gly-70, Gly-71, His-77, Gly-78, Gly-79, His-85, Gly-86, and Gly-87 together coordinate Cu(2+). A disulfide bond links Cys-179 and Cys-214. Asn-181 and Asn-197 each carry an N-linked (GlcNAc...) asparagine glycan. Residue Ser-230 is the site of GPI-anchor amidated serine attachment. A propeptide spans 231 to 253 (SMVLFSSPPVILLISFLIFLIVG) (removed in mature form).

This sequence belongs to the prion family. Monomer and homodimer. Has a tendency to aggregate into amyloid fibrils containing a cross-beta spine, formed by a steric zipper of superposed beta-strands. Soluble oligomers may represent an intermediate stage on the path to fibril formation. Copper binding may promote oligomerization. Interacts with GRB2, APP, ERI3/PRNPIP and SYN1. Mislocalized cytosolically exposed PrP interacts with MGRN1; this interaction alters MGRN1 subcellular location and causes lysosomal enlargement. Interacts with KIAA1191.

Its subcellular location is the cell membrane. The protein localises to the golgi apparatus. Its function is as follows. Its primary physiological function is unclear. Has cytoprotective activity against internal or environmental stresses. May play a role in neuronal development and synaptic plasticity. May be required for neuronal myelin sheath maintenance. May play a role in iron uptake and iron homeostasis. Soluble oligomers are toxic to cultured neuroblastoma cells and induce apoptosis (in vitro). Association with GPC1 (via its heparan sulfate chains) targets PRNP to lipid rafts. Also provides Cu(2+) or Zn(2+) for the ascorbate-mediated GPC1 deaminase degradation of its heparan sulfate side chains. The protein is Major prion protein (PRNP) of Hylobates lar (Lar gibbon).